We begin with the raw amino-acid sequence, 218 residues long: Thiopurine S-methyltransferase (218 aa).

4 residues coordinate S-adenosyl-L-methionine: Trp-10, Leu-45, Glu-66, and Arg-123.

It belongs to the class I-like SAM-binding methyltransferase superfamily. TPMT family.

It localises to the cytoplasm. The catalysed reaction is S-adenosyl-L-methionine + a thiopurine = S-adenosyl-L-homocysteine + a thiopurine S-methylether.. This is Thiopurine S-methyltransferase from Shewanella baltica (strain OS185).